The chain runs to 127 residues: Probable 4-amino-4-deoxy-L-arabinose-phosphoundecaprenol flippase subunit ArnF (127 aa).

Over 1-2 (MG) the chain is Cytoplasmic. Residues 3-23 (LLFALGSVVLVSAAQLLLKWA) form a helical membrane-spanning segment. Residues 24-47 (MIQLPDISQLPQFLSSLSQFPLPT) are Periplasmic-facing. Residues 48 to 68 (AALFLGLLAYALSMLCWLLAL) form a helical membrane-spanning segment. Topologically, residues 69–76 (KRLPLSRA) are cytoplasmic. Residues 77–97 (YPLLSLSYLLVWLAALWLPGL) form a helical membrane-spanning segment. Topologically, residues 98-102 (NEVFR) are periplasmic. The helical transmembrane segment at 103–123 (WGKLAGAGLIVSGLLLICWPA) threads the bilayer. Topologically, residues 124 to 127 (AKTR) are cytoplasmic.

This sequence belongs to the ArnF family. As to quaternary structure, heterodimer of ArnE and ArnF.

The protein resides in the cell inner membrane. Its pathway is bacterial outer membrane biogenesis; lipopolysaccharide biosynthesis. Its function is as follows. Translocates 4-amino-4-deoxy-L-arabinose-phosphoundecaprenol (alpha-L-Ara4N-phosphoundecaprenol) from the cytoplasmic to the periplasmic side of the inner membrane. This chain is Probable 4-amino-4-deoxy-L-arabinose-phosphoundecaprenol flippase subunit ArnF, found in Erwinia tasmaniensis (strain DSM 17950 / CFBP 7177 / CIP 109463 / NCPPB 4357 / Et1/99).